A 335-amino-acid polypeptide reads, in one-letter code: Dolichyl-diphosphooligosaccharide--protein glycosyltransferase subunit MAGT1 (335 aa).

The first 29 residues, 1-29 (MAARWRFWCVSVTMVVALLIVCDVPSASA), serve as a signal peptide directing secretion. At 30–184 (QRKKEMVLSE…DVNIRVIRPP (155 aa)) the chain is on the extracellular side. The Thioredoxin domain occupies 47–175 (WTNKRPVIRM…IARWIADRTD (129 aa)). An N-linked (GlcNAc...) asparagine glycan is attached at asparagine 71. The cysteines at positions 87 and 90 are disulfide-linked. A helical transmembrane segment spans residues 185 to 205 (NYAGPLMLGLLLAVIGGLVYL). At 206–209 (RRSN) the chain is on the cytoplasmic side. A helical membrane pass occupies residues 210–230 (MEFLFNKTGWAFAALCFVLAM). At 231-270 (TSGQMWNHIRGPPYAHKNPHTGHVNYIHGSSQAQFVAETH) the chain is on the extracellular side. The helical transmembrane segment at 271–291 (IVLLFNGGVTLGMVLLCEAAT) threads the bilayer. The Cytoplasmic segment spans residues 292-300 (SDMDIGKRK). The helical transmembrane segment at 301–321 (IMCVAGIGLVVLFFSWMLSIF) threads the bilayer. Residues 322 to 335 (RSKYHGYPYSFLMS) are Extracellular-facing.

Belongs to the OST3/OST6 family. Accessory component of the STT3B-containing form of the oligosaccharyltransferase (OST) complex. OST exists in two different complex forms which contain common core subunits RPN1, RPN2, OST48, OST4, DAD1 and TMEM258, either STT3A or STT3B as catalytic subunits, and form-specific accessory subunits. OST can form stable complexes with the Sec61 complex or with both the Sec61 and TRAP complexes. The association of TUSC3 or MAGT1 with the STT3B-containing complex seems to be mutually exclusvice. As to expression, ubiquitous. Expressed at very low levels in brain, lung and kidney.

It localises to the cell membrane. Its subcellular location is the endoplasmic reticulum. The protein resides in the endoplasmic reticulum membrane. It functions in the pathway protein modification; protein glycosylation. Its function is as follows. Accessory component of the STT3B-containing form of the N-oligosaccharyl transferase (OST) complex which catalyzes the transfer of a high mannose oligosaccharide from a lipid-linked oligosaccharide donor to an asparagine residue within an Asn-X-Ser/Thr consensus motif in nascent polypeptide chains. Involved in N-glycosylation of STT3B-dependent substrates. Specifically required for the glycosylation of a subset of acceptor sites that are near cysteine residues; in this function seems to act redundantly with TUSC3. In its oxidized form proposed to form transient mixed disulfides with a glycoprotein substrate to facilitate access of STT3B to the unmodified acceptor site. Also has oxidoreductase-independent functions in the STT3B-containing OST complex possibly involving substrate recognition. Could indirectly play a role in Mg(2+) transport in epithelial cells. The chain is Dolichyl-diphosphooligosaccharide--protein glycosyltransferase subunit MAGT1 from Homo sapiens (Human).